A 750-amino-acid polypeptide reads, in one-letter code: Photosystem I P700 chlorophyll a apoprotein A1 (750 aa).

Helical transmembrane passes span 70-93, 156-179, 195-219, 291-309, 346-369, 385-411, 433-455, and 531-549; these read VFSAHFGQLAIIFIWLSGMYFHGA, LYSTAIGGLIFAALMLFAGWFHYH, LNHHLAGLLGLGSLSWAGHQVHVSL, TVHHHLAIAVLFLIAGHMY, WHAQLALNLAMLGSLTIVVAHHMY, LSLFTHHMWIGGFLVVGAAAHAAIFMV, AIVSHLNWACIFLGFHSFGLYIH, and FLVHHIHAFTIHVTVLILL. [4Fe-4S] cluster-binding residues include C573 and C582. The next 2 membrane-spanning stretches (helical) occupy residues 589-610 and 664-686; these read HVFLGLFWMYNAISVVIFHFSW and LSAYGLPFLGAHFVWAFSLMFLF. H675 is a binding site for chlorophyll a'. Chlorophyll a is bound by residues M683 and Y691. Residue W692 coordinates phylloquinone. A helical transmembrane segment spans residues 724-744; sequence AVGVAHYLLGGIATTWAFFLA.

This sequence belongs to the PsaA/PsaB family. The PsaA/B heterodimer binds the P700 chlorophyll special pair and subsequent electron acceptors. PSI consists of a core antenna complex that captures photons, and an electron transfer chain that converts photonic excitation into a charge separation. The eukaryotic PSI reaction center is composed of at least 11 subunits. Requires P700 is a chlorophyll a/chlorophyll a' dimer, A0 is one or more chlorophyll a, A1 is one or both phylloquinones and FX is a shared 4Fe-4S iron-sulfur center. as cofactor.

It localises to the plastid. It is found in the chloroplast thylakoid membrane. The enzyme catalyses reduced [plastocyanin] + hnu + oxidized [2Fe-2S]-[ferredoxin] = oxidized [plastocyanin] + reduced [2Fe-2S]-[ferredoxin]. Its function is as follows. PsaA and PsaB bind P700, the primary electron donor of photosystem I (PSI), as well as the electron acceptors A0, A1 and FX. PSI is a plastocyanin-ferredoxin oxidoreductase, converting photonic excitation into a charge separation, which transfers an electron from the donor P700 chlorophyll pair to the spectroscopically characterized acceptors A0, A1, FX, FA and FB in turn. Oxidized P700 is reduced on the lumenal side of the thylakoid membrane by plastocyanin. The sequence is that of Photosystem I P700 chlorophyll a apoprotein A1 from Huperzia lucidula (Shining clubmoss).